The primary structure comprises 906 residues: Cadherin-2 (906 aa).

The signal sequence occupies residues 1–25 (MCRIAGGPRTLLPLLAALLQASLEA). A propeptide spanning residues 26–159 (SGELALCKTG…HSGALQRQKR (134 aa)) is cleaved from the precursor. Ser-96 is subject to Phosphoserine. Cadherin domains are found at residues 160 to 267 (DWVI…RPEF), 268 to 382 (LHQV…PPEF), 383 to 497 (TAMT…NPYF), 498 to 603 (APNP…DNAP), and 604 to 717 (QVLP…RIVG). Residues 160-724 (DWVIPPINLP…IVGAGLGTGT (565 aa)) lie on the Extracellular side of the membrane. A Ca(2+)-binding site is contributed by Glu-170. Asn-190 is a glycosylation site (N-linked (GlcNAc...) asparagine). Positions 226, 228, 259, 260, 261, 262, and 263 each coordinate Ca(2+). Asn-273 carries N-linked (GlcNAc...) asparagine glycosylation. The Ca(2+) site is built by Asp-293, Asp-295, and Asn-301. N-linked (GlcNAc...) asparagine glycosylation occurs at Asn-325. Asp-353 lines the Ca(2+) pocket. N-linked (GlcNAc...) asparagine glycosylation is found at Asn-402, Asn-572, Asn-622, Asn-651, and Asn-692. Residues 725-745 (IIAILLCIIILLILVLMFVVW) traverse the membrane as a helical segment. The Cytoplasmic segment spans residues 746–906 (MKRRDKERQA…LADMYGGGDD (161 aa)). The span at 863-880 (SGSTAGSLSSLNSSSSGG) shows a compositional bias: low complexity. The interval 863–883 (SGSTAGSLSSLNSSSSGGDQD) is disordered.

As to quaternary structure, homodimer (via extracellular region). Can also form heterodimers with other cadherins (via extracellular region). Dimerization occurs in trans, i.e. with a cadherin chain from another cell. Interacts with PCDH8; this complex may also include TAOK2. The interaction with PCDH8 may lead to internalization through TAOK2/p38 MAPK pathway. Identified in a complex containing FGFR4, NCAM1, CDH2, PLCG1, FRS2, SRC, SHC1, GAP43 and CTTN. May interact with OBSCN (via protein kinase domain 2). Interacts with FBXO45. In terms of processing, cleaved by MMP24. Ectodomain cleavage leads to the generation of a soluble 90 kDa N-terminal soluble fragment and a 45 kDa membrane-bound C-terminal fragment 1 (CTF1), which is further cleaved by gamma-secretase into a 35 kDa. Cleavage in neural stem cells by MMP24 affects CDH2-mediated anchorage of neural stem cells to ependymocytes in the adult subependymal zone, leading to modulate neural stem cell quiescence. Post-translationally, may be phosphorylated by OBSCN. As to expression, in testis, expressed in Sertoli and germ cells.

The protein resides in the cell membrane. Its subcellular location is the sarcolemma. The protein localises to the cell junction. It is found in the cell surface. It localises to the desmosome. The protein resides in the adherens junction. Its function is as follows. Calcium-dependent cell adhesion protein; preferentially mediates homotypic cell-cell adhesion by dimerization with a CDH2 chain from another cell. Cadherins may thus contribute to the sorting of heterogeneous cell types. Acts as a regulator of neural stem cells quiescence by mediating anchorage of neural stem cells to ependymocytes in the adult subependymal zone: upon cleavage by MMP24, CDH2-mediated anchorage is affected, leading to modulate neural stem cell quiescence. Plays a role in cell-to-cell junction formation between pancreatic beta cells and neural crest stem (NCS) cells, promoting the formation of processes by NCS cells. Required for proper neurite branching. Required for pre- and postsynaptic organization. CDH2 may be involved in neuronal recognition mechanism. In hippocampal neurons, may regulate dendritic spine density. The protein is Cadherin-2 (Cdh2) of Rattus norvegicus (Rat).